The sequence spans 295 residues: Glutamyl-Q tRNA(Asp) synthetase (295 aa).

Residues 9-13 and E45 each bind L-glutamate; that span reads RFAPT. The 'HIGH' region motif lies at 12-22; the sequence is PTPSGYLHFGS. Residues C101, C103, Y115, and C119 each contribute to the Zn(2+) site. 2 residues coordinate L-glutamate: Y172 and R190. A 'KMSKS' region motif is present at residues 228-232; the sequence is KLGKS. Residue K231 coordinates ATP.

It belongs to the class-I aminoacyl-tRNA synthetase family. GluQ subfamily. Zn(2+) is required as a cofactor.

Its function is as follows. Catalyzes the tRNA-independent activation of glutamate in presence of ATP and the subsequent transfer of glutamate onto a tRNA(Asp). Glutamate is transferred on the 2-amino-5-(4,5-dihydroxy-2-cyclopenten-1-yl) moiety of the queuosine in the wobble position of the QUC anticodon. This Pseudomonas syringae pv. tomato (strain ATCC BAA-871 / DC3000) protein is Glutamyl-Q tRNA(Asp) synthetase.